The sequence spans 67 residues: Beta-defensin 36 (67 aa).

The N-terminal stretch at 1–22 (MKLLLLTLAALLLVSQLTPGDA) is a signal peptide. 3 disulfide bridges follow: Cys25/Cys52, Cys32/Cys46, and Cys36/Cys53.

The protein belongs to the beta-defensin family.

The protein resides in the secreted. Its function is as follows. Has antibacterial activity. The chain is Beta-defensin 36 (Defb36) from Mus musculus (Mouse).